The following is a 194-amino-acid chain: MGAKLVAATHNPGKVPEIAALLDGRFEIVTAGQLGLPEPDETESTFVGNALLKARHAADLSGLPALADDSGLSVTALDGAPGIFSARWAGPGKDFALAMKKVEERLEETASDDRTAWFTSALAVAWPNGPAVVVEGRVDGTLVFPGRGTRGFGYDPIFVPEGHALTFGEMEPAAKDAMSHRARAFAKLKAALFD.

Residue 9–14 participates in substrate binding; sequence THNPGK. Residues aspartate 40 and aspartate 69 each contribute to the Mg(2+) site. Catalysis depends on aspartate 69, which acts as the Proton acceptor. Substrate-binding positions include serine 70, 152–155, lysine 175, and 180–181; these read FGYD and HR.

The protein belongs to the HAM1 NTPase family. As to quaternary structure, homodimer. It depends on Mg(2+) as a cofactor.

It catalyses the reaction XTP + H2O = XMP + diphosphate + H(+). The enzyme catalyses dITP + H2O = dIMP + diphosphate + H(+). It carries out the reaction ITP + H2O = IMP + diphosphate + H(+). Its function is as follows. Pyrophosphatase that catalyzes the hydrolysis of nucleoside triphosphates to their monophosphate derivatives, with a high preference for the non-canonical purine nucleotides XTP (xanthosine triphosphate), dITP (deoxyinosine triphosphate) and ITP. Seems to function as a house-cleaning enzyme that removes non-canonical purine nucleotides from the nucleotide pool, thus preventing their incorporation into DNA/RNA and avoiding chromosomal lesions. This is dITP/XTP pyrophosphatase from Caulobacter vibrioides (strain ATCC 19089 / CIP 103742 / CB 15) (Caulobacter crescentus).